Consider the following 434-residue polypeptide: Enolase (434 aa).

Glutamine 168 contributes to the (2R)-2-phosphoglycerate binding site. Glutamate 210 serves as the catalytic Proton donor. Aspartate 247, glutamate 292, and aspartate 319 together coordinate Mg(2+). Positions 344, 373, 374, and 395 each coordinate (2R)-2-phosphoglycerate. Lysine 344 acts as the Proton acceptor in catalysis.

It belongs to the enolase family. It depends on Mg(2+) as a cofactor.

Its subcellular location is the cytoplasm. It is found in the secreted. The protein localises to the cell surface. It catalyses the reaction (2R)-2-phosphoglycerate = phosphoenolpyruvate + H2O. It functions in the pathway carbohydrate degradation; glycolysis; pyruvate from D-glyceraldehyde 3-phosphate: step 4/5. In terms of biological role, catalyzes the reversible conversion of 2-phosphoglycerate (2-PG) into phosphoenolpyruvate (PEP). It is essential for the degradation of carbohydrates via glycolysis. This Endomicrobium trichonymphae protein is Enolase.